We begin with the raw amino-acid sequence, 237 residues long: MSSLKKILGLKGKGKKSKKLGIAPPPYEEDTSMEYAPSAPIDKSYFGVDEMDTHDPNQLRYEKSFFTVKMTVRSNRPFRTYSDVAAAVSHWDHMYIGMAGKRPFYKILAFLGSSNLKATPAVLADQGQPEYHAHCEGRAYLPHRMGKTPPMLNVPEHFRRPFNIGLYKGTIELTMTIYDDESLEAAPMIWDHFNSSKFSDFREKALMFGLIVEEEASGAWVLDSVRHSKWASLASSF.

Residues 1 to 10 (MSSLKKILGL) are compositionally biased toward low complexity. The disordered stretch occupies residues 1–23 (MSSLKKILGLKGKGKKSKKLGIA). Positions 2–4 (SSL) match the dynamin binding motif. A PPXY motif motif is present at residues 24–27 (PPPY). The PTAP/PSAP motif signature appears at 37 to 40 (PSAP).

Belongs to the vesiculoviruses matrix protein family. Homomultimer. Interacts with viral nucleocapsid; this interaction contributes to the virion assembly. Interacts with the viral envelope glycoprotein; this interaction contributes to the virion assembly. Interacts with host RAE1-NUP98 complex. Interacts with host NEDD4 and TSG101. Interacts with host dynamin. Interacts with host NDUFAF4; the interaction inhibits viral propagation and is independent of interferon activation. Interacts with host GTF2H5; the interaction may inhibit host transcription. In terms of processing, phosphorylated by host.

It is found in the virion. Its subcellular location is the host endomembrane system. The protein resides in the host nucleus membrane. It localises to the host nucleus. The protein localises to the host cytoplasm. Functionally, forms a double layer around the helical nucleocapsid, the inner matrix layer binding to the N helix and the outer matrix layer binding to the envelope glycoprotein. Plays a major role in assembly and budding of virion, by recruiting cellular partners of the ESCRT complexes that play a key role in releasing the budding particle from the host membrane. Condensates the ribonucleocapsid core during virus assembly. Inhibits the host mRNA nuclear export thereby inducing the shut off of cellular transcription and preventing the interferon signaling and the establishment of antiviral state in infected cells. This shutoff presumably inhibits interferon signaling and thus establishment of antiviral state in virus infected cells. Induces cell-rounding, cytoskeleton disorganization and apoptosis in infected cell. Inhibits host transcription, possibly through interaction with host DNA repair factor IIH/TFIIH GTF2H5 subunit. In Aedes (Bovine), this protein is Matrix protein (M).